A 586-amino-acid polypeptide reads, in one-letter code: Protein NRT1/ PTR FAMILY 5.3 (586 aa).

Transmembrane regions (helical) follow at residues 77–97, 100–120, 141–161, 189–209, 217–237, 334–354, 370–390, 408–428, 449–469, 492–512, and 538–558; these read WVGTSWLTPILGAYVADAHFG, ITFVISSAIYLLGMALLTLSV, ASVIQLAVFFGALYTLAIGTG, FFNWWMFSIFFGTFFATTVLV, WAIGYGLSTLGLAFSIFIFLL, PVLFVTFVPSMMLAQIMTLFI, IPPASLLGFTTFSMLVSIVIY, ITLLQRMGIGMILHILIMIIA, AVPIPLSIFTLLPQYVLMGLA, LGTSYTSTSMAVGYFMSSILL, and NYYMFFAVLNLLNFILFLVVI.

This sequence belongs to the major facilitator superfamily. Proton-dependent oligopeptide transporter (POT/PTR) (TC 2.A.17) family. Expressed in roots and siliques.

It is found in the membrane. Peptide transporter. The chain is Protein NRT1/ PTR FAMILY 5.3 (NPF5.3) from Arabidopsis thaliana (Mouse-ear cress).